Reading from the N-terminus, the 151-residue chain is Large ribosomal subunit protein bL9 (151 aa).

The protein belongs to the bacterial ribosomal protein bL9 family.

In terms of biological role, binds to the 23S rRNA. The chain is Large ribosomal subunit protein bL9 from Francisella tularensis subsp. tularensis (strain FSC 198).